We begin with the raw amino-acid sequence, 907 residues long: Phosphoenolpyruvate carboxylase (907 aa).

Active-site residues include histidine 138 and lysine 570.

This sequence belongs to the PEPCase type 1 family. Requires Mg(2+) as cofactor.

The enzyme catalyses oxaloacetate + phosphate = phosphoenolpyruvate + hydrogencarbonate. Forms oxaloacetate, a four-carbon dicarboxylic acid source for the tricarboxylic acid cycle. This chain is Phosphoenolpyruvate carboxylase, found in Streptococcus mutans serotype c (strain ATCC 700610 / UA159).